Reading from the N-terminus, the 405-residue chain is [PIN+] prion protein RNQ1 (405 aa).

Glycyl lysine isopeptide (Lys-Gly) (interchain with G-Cter in ubiquitin) cross-links involve residues lysine 5 and lysine 84. Residue serine 143 is modified to Phosphoserine. Disordered regions lie at residues 149 to 172 and 185 to 405; these read GNNS…QGQG and MNSN…QNRY. Residues 153–402 form a prion domain (PrD) region; sequence QGQGQGQGQG…FSQQNNNGNQ (250 aa). Gly residues predominate over residues 155-171; the sequence is QGQGQGQGQGQGQGQGQ. Low complexity-rich tracts occupy residues 185 to 261 and 283 to 353; these read MNSN…QQQG and TQSN…QQAN. Composition is skewed to polar residues over residues 358-368 and 375-385; these read PQQNGQQQSNE and GGNQNSNGQHE. The segment covering 386 to 405 has biased composition (low complexity); the sequence is SFNFSGNFSQQNNNGNQNRY.

Its subcellular location is the cytoplasm. The protein resides in the nucleus. Its function is as follows. Transferable epigenetic modifier which forms a prion responsible for the non-Mendelian trait [PIN+]. The native function of the soluble protein is unknown. The polypeptide is [PIN+] prion protein RNQ1 (RNQ1) (Saccharomyces cerevisiae (strain ATCC 204508 / S288c) (Baker's yeast)).